The sequence spans 798 residues: Gelsolin (798 aa).

The signal sequence occupies residues 1-28; that stretch reads MDASGAATMAVLSSLLVFLALSSSLCSA. An actin-severing region spans residues 57-181; that stretch reads RVMHPSFANA…YEQGGVGTGF (125 aa). Residues 78 to 131 form a Gelsolin-like 1 repeat; that stretch reads ENFEPVIYPKTNYGKFYTGDSFIVLNTIENKKDKKLSWDVHFWLGLETSTDEAG. Y90 carries the phosphotyrosine; by SRC modification. Positions 128–131 are actin-actin interfilament contact point; sequence DEAG. A 1,2-diacyl-sn-glycero-3-phospho-(1D-myo-inositol-4,5-bisphosphate) is bound by residues 167 to 174 and 193 to 201; these read KNGIRYEQ and RLFQVKGKR. Gelsolin-like repeat units lie at residues 203–243, 322–365, 474–524, and 583–625; these read VRVR…VEKL, LKVD…KEKT, IVVS…AARK, and VHAS…FEKQ. Positions 451–792 are actin-binding, Ca-sensitive; it reads MPDHGQNVIE…SYEDMKQLVI (342 aa). D599 is a Ca(2+) binding site. Y612 carries the phosphotyrosine; by SRC modification. E623 serves as a coordination point for Ca(2+). Y662 is subject to Phosphotyrosine; by SRC. The Gelsolin-like 6 repeat unit spans residues 689–730; that stretch reads LKVEEVAQYEQEDLDSDDIMLLDAGDEIYLWVGYGVSEEENG. D705, D706, and E728 together coordinate Ca(2+).

It belongs to the villin/gelsolin family. As to quaternary structure, binds to actin and to fibronectin. In terms of tissue distribution, isoform 1 and isoform 2 are ubiquitously expressed in early embryo. Isoform 1 is expressed in the fat body, and is abundant in hemolymph. Isoform 2 is expressed in parts of the gut.

It localises to the cytoplasm. The protein localises to the cytoskeleton. Its subcellular location is the secreted. Functionally, calcium-regulated, actin-modulating protein that binds to the plus (or barbed) ends of actin monomers or filaments, preventing monomer exchange (end-blocking or capping). It can promote the assembly of monomers into filaments (nucleation) as well as sever filaments already formed. The polypeptide is Gelsolin (Gel) (Drosophila melanogaster (Fruit fly)).